Here is a 674-residue protein sequence, read N- to C-terminus: DNA ligase (674 aa).

NAD(+)-binding positions include 34 to 38 (DFEFD), 83 to 84 (SL), and E117. Residue K119 is the N6-AMP-lysine intermediate of the active site. R140, E184, K297, and K321 together coordinate NAD(+). Residues C415, C418, C433, and C439 each contribute to the Zn(2+) site. In terms of domain architecture, BRCT spans 598–674 (LVNNNFEGQS…IDEDEFERML (77 aa)).

It belongs to the NAD-dependent DNA ligase family. LigA subfamily. The cofactor is Mg(2+). Mn(2+) serves as cofactor.

It catalyses the reaction NAD(+) + (deoxyribonucleotide)n-3'-hydroxyl + 5'-phospho-(deoxyribonucleotide)m = (deoxyribonucleotide)n+m + AMP + beta-nicotinamide D-nucleotide.. Functionally, DNA ligase that catalyzes the formation of phosphodiester linkages between 5'-phosphoryl and 3'-hydroxyl groups in double-stranded DNA using NAD as a coenzyme and as the energy source for the reaction. It is essential for DNA replication and repair of damaged DNA. This Chlorobaculum tepidum (strain ATCC 49652 / DSM 12025 / NBRC 103806 / TLS) (Chlorobium tepidum) protein is DNA ligase.